A 122-amino-acid polypeptide reads, in one-letter code: uncharacterized protein (122 aa).

This is an uncharacterized protein from Arabidopsis thaliana (Mouse-ear cress).